A 347-amino-acid polypeptide reads, in one-letter code: Quinolinate synthase (347 aa).

2 residues coordinate iminosuccinate: His47 and Ser68. Cys113 contributes to the [4Fe-4S] cluster binding site. Iminosuccinate-binding positions include 139–141 and Ser156; that span reads YAN. [4Fe-4S] cluster is bound at residue Cys200. Iminosuccinate is bound by residues 226–228 and Thr243; that span reads HPE. Residue Cys297 participates in [4Fe-4S] cluster binding.

This sequence belongs to the quinolinate synthase family. Type 1 subfamily. The cofactor is [4Fe-4S] cluster.

It localises to the cytoplasm. The enzyme catalyses iminosuccinate + dihydroxyacetone phosphate = quinolinate + phosphate + 2 H2O + H(+). The protein operates within cofactor biosynthesis; NAD(+) biosynthesis; quinolinate from iminoaspartate: step 1/1. Functionally, catalyzes the condensation of iminoaspartate with dihydroxyacetone phosphate to form quinolinate. The protein is Quinolinate synthase of Salmonella heidelberg (strain SL476).